The primary structure comprises 704 residues: Transcription factor HNF-4 homolog (704 aa).

A disordered region spans residues Ser-93–Gln-133. A compositionally biased stretch (low complexity) spans Ser-100–Gln-133. Positions Pro-139–Asn-214 form a DNA-binding region, nuclear receptor. 2 consecutive NR C4-type zinc fingers follow at residues Cys-142 to Cys-162 and Cys-178 to Cys-197. The 239-residue stretch at Gly-232–Gly-470 folds into the NR LBD domain. Disordered regions lie at residues Asp-474 to Ser-520, Pro-563 to His-624, and Pro-684 to Tyr-704. Over residues Asp-487–Thr-512 the composition is skewed to polar residues. Residues Pro-563–Pro-574 show a composition bias toward low complexity. Over residues Gly-608–Pro-620 the composition is skewed to polar residues.

This sequence belongs to the nuclear hormone receptor family. NR2 subfamily. Homodimer. In terms of tissue distribution, in third instar larvae, expressed at high levels in midgut and attached gastric caeca, fat body, Malpighian tubules and oenocytes, and at lower levels in proventriculus, salivary glands, epidermis, brain and ring gland. Not detected in imaginal disks and the median neurosecretory cells that produce insulin-like peptides (at protein level). In developing embryos, expressed in mid-gut, fat bodies and the distal region of Malpighian tubules.

Its subcellular location is the nucleus. In terms of biological role, transcriptionally controlled transcription factor. Important for the differentiation of various specialized cell types that arise from both endoderm and mesoderm. May have a role in early gut formation. Plays an essential role in lipid catabolism, regulating lipid mobilization and beta-oxidation in response to nutrient deprivation. This is Transcription factor HNF-4 homolog (Hnf4) from Drosophila melanogaster (Fruit fly).